Consider the following 124-residue polypeptide: Large ribosomal subunit protein bL20c (124 aa).

Belongs to the bacterial ribosomal protein bL20 family.

The protein localises to the plastid. The protein resides in the chloroplast. In terms of biological role, binds directly to 23S ribosomal RNA and is necessary for the in vitro assembly process of the 50S ribosomal subunit. It is not involved in the protein synthesizing functions of that subunit. The chain is Large ribosomal subunit protein bL20c from Stigeoclonium helveticum (Green alga).